Reading from the N-terminus, the 119-residue chain is uncharacterized protein (119 aa).

The next 2 helical transmembrane spans lie at 52-72 (IVLFVLGFLLLIPWIINVINI) and 88-108 (VLFSLSIAIIVIFVIFFIFLI).

Its subcellular location is the membrane. This is an uncharacterized protein from Dictyostelium discoideum (Social amoeba).